Here is a 131-residue protein sequence, read N- to C-terminus: Histone H2A-beta (131 aa).

The residue at position 2 (Ser-2) is an N-acetylserine. Residues Lys-5 and Lys-9 each carry the N6-acetyllysine modification. Gln-106 carries the post-translational modification N5-methylglutamine. Position 128 is a phosphoserine (Ser-128). Residues 128–129 (SQ) carry the [ST]-Q motif motif.

Belongs to the histone H2A family. In terms of assembly, the nucleosome is a histone octamer containing two molecules each of H2A, H2B, H3 and H4 assembled in one H3-H4 heterotetramer and two H2A-H2B heterodimers. The octamer wraps approximately 147 bp of DNA. In terms of processing, phosphorylated to form H2AS128ph (gamma-H2A) in response to DNA double-strand breaks (DSBs) generated by exogenous genotoxic agents and by stalled replication forks. Phosphorylation is dependent on the DNA damage checkpoint kinases rad3/ATR and tel1/ATM, spreads on either side of a detected DSB site and may mark the surrounding chromatin for recruitment of proteins required for DNA damage signaling and repair. Gamma-H2A is required for recruiting crb2, a modulator of DNA damage checkpoint signaling, to DSB sites. Gamma-H2A is removed from the DNA prior to the strand invasion-primer extension step of the repair process and subsequently dephosphorylated. Dephosphorylation is necessary for efficient recovery from the DNA damage checkpoint. Acetylated by esa1 to form H2AK4ac and H2AK7ac.

Its subcellular location is the nucleus. The protein resides in the chromosome. Its function is as follows. Core component of nucleosome which plays a central role in DNA double strand break (DSB) repair. Nucleosomes wrap and compact DNA into chromatin, limiting DNA accessibility to the cellular machineries which require DNA as a template. Histones thereby play a central role in transcription regulation, DNA repair, DNA replication and chromosomal stability. DNA accessibility is regulated via a complex set of post-translational modifications of histones, also called histone code, and nucleosome remodeling. The chain is Histone H2A-beta (hta2) from Schizosaccharomyces pombe (strain 972 / ATCC 24843) (Fission yeast).